Reading from the N-terminus, the 1050-residue chain is TSC22 domain family protein 1 (1050 aa).

The required for interaction with TGFBR1 and promotion of TGF-beta signaling stretch occupies residues 1–99 (MHQPPESTAA…SQAQLQGQPL (99 aa)). 8 disordered regions span residues 22–111 (MAHP…KKSG), 126–285 (ISSN…VSSA), 445–479 (QTPT…SVGS), 511–531 (DFSS…VQLQ), 581–609 (LAQP…QLQY), 720–740 (VQPP…PPSS), 795–847 (QLPT…GSLV), and 879–919 (SLAQ…VSDG). Residues 38-55 (ASALSAAGTGVSGAAPSS) are compositionally biased toward low complexity. Pro residues predominate over residues 58–71 (FPPPSSLLQPPPPA). Over residues 85 to 97 (SLNLLSQAQLQGQ) the composition is skewed to low complexity. A compositionally biased stretch (acidic residues) spans 134-143 (EDTESYDDLD). Positions 217 to 241 (HPHHLHHHHHIHHGHHLHHGHHHSS) are enriched in basic residues. Ser265 is modified (phosphoserine). Residues 458 to 476 (TSGSSVSSSVSTLSHYTES) show a composition bias toward low complexity. Over residues 586–603 (LPYPQPAPPVQTPLPGAP) the composition is skewed to pro residues. Low complexity predominate over residues 906 to 919 (LSGDSGGVSAVSDG). Residues 983-1004 (LKEQIKELIEKNSQLEQENNLL) are leucine-zipper. The interval 1015–1050 (QFQAQLQTGSPPATTQPQGTTQPPAQPASQGSGSTA) is disordered. Low complexity predominate over residues 1021-1050 (QTGSPPATTQPQGTTQPPAQPASQGSGSTA).

It belongs to the TSC-22/Dip/Bun family. As to quaternary structure, forms homodimers. Forms heterodimers. Component of a complex composed of TSC22D1 (via N-terminus), TGFBR1 and TGFBR2; the interaction between TSC22D1 and TGFBR1 is inhibited by SMAD7 and promoted by TGFB1. Interacts with SMAD7; the interaction requires TGF-beta and the interaction is inhibited by TGFBR1. Interacts with TPT1/fortilin; interaction results in the destabilization of TSC22D1 protein and prevents TSC22D1-mediated apoptosis. Interacts with SMAD4 (via N-terminus). Interacts with ACVRL1/ALK1, ACVR1/ALK2, BMPR1A/ALK3, ACVR1B/ALK4, BMPR1B/ALK6, ACVR2A/ACTRII, and BMPR2. Interacts with SMAD6. Interacts with TFE3; the interaction is enhanced in the presence of TGF-beta. In terms of assembly, forms a heterodimer with TSC22D4/THG1. Forms a heterodimer with TSC22D4/THG1. Interacts with histone H1-2. Interacts with GNL3. Ubiquitously expressed, abundantly expressed in testis, ovary, uterus, and lung. Expressed in cardiomyocytes.

Its subcellular location is the cytoplasm. It is found in the nucleus. The protein resides in the cell membrane. The protein localises to the mitochondrion. Functionally, transcriptional repressor. Acts on the C-type natriuretic peptide (CNP) promoter. Acts to promote CASP3-mediated apoptosis. Positively regulates TGF-beta signaling by interacting with SMAD7 which inhibits binding of SMAD7 to TGFBR1, preventing recruitment of SMURF ubiquitin ligases to TGFBR1 and inhibiting SMURF-mediated ubiquitination and degradation of TGFBR1. Contributes to enhancement of TGF-beta signaling by binding to and modulating the transcription activator activity of SMAD4. Promotes TGF-beta-induced transcription of COL1A2; via its interaction with TFE3 at E-boxes in the gene proximal promoter. Plays a role in the repression of hematopoietic precursor cell growth. Promotes IL2 deprivation-induced apoptosis in T-lymphocytes, via repression of TSC22D3/GILZ transcription and activation of the caspase cascade. May act to negatively regulate TGFB3 signaling and thereby inhibit cell death in mammary gland cells. In terms of biological role, positively regulates cell death in response to TGFB3 during mammary gland involution. This Rattus norvegicus (Rat) protein is TSC22 domain family protein 1.